The primary structure comprises 464 residues: uncharacterized protein (464 aa).

An N-terminal signal peptide occupies residues 1–24; sequence MSRFVPRIIPFYLLLLVAGGTANA.

This sequence belongs to the intimin/invasin family.

It localises to the periplasm. This is an uncharacterized protein from Escherichia coli (strain K12).